The chain runs to 435 residues: Serine--tRNA ligase (435 aa).

L-serine is bound at residue 238–240; sequence TAE. 269–271 serves as a coordination point for ATP; that stretch reads RAE. Glutamate 292 contributes to the L-serine binding site. 356–359 is an ATP binding site; it reads EISS. Serine 392 is a binding site for L-serine.

It belongs to the class-II aminoacyl-tRNA synthetase family. Type-1 seryl-tRNA synthetase subfamily. As to quaternary structure, homodimer. The tRNA molecule binds across the dimer.

The protein localises to the cytoplasm. It carries out the reaction tRNA(Ser) + L-serine + ATP = L-seryl-tRNA(Ser) + AMP + diphosphate + H(+). It catalyses the reaction tRNA(Sec) + L-serine + ATP = L-seryl-tRNA(Sec) + AMP + diphosphate + H(+). It functions in the pathway aminoacyl-tRNA biosynthesis; selenocysteinyl-tRNA(Sec) biosynthesis; L-seryl-tRNA(Sec) from L-serine and tRNA(Sec): step 1/1. Functionally, catalyzes the attachment of serine to tRNA(Ser). Is also able to aminoacylate tRNA(Sec) with serine, to form the misacylated tRNA L-seryl-tRNA(Sec), which will be further converted into selenocysteinyl-tRNA(Sec). In Methylobacterium sp. (strain 4-46), this protein is Serine--tRNA ligase.